A 480-amino-acid polypeptide reads, in one-letter code: Aspartyl/glutamyl-tRNA(Asn/Gln) amidotransferase subunit B (480 aa).

This sequence belongs to the GatB/GatE family. GatB subfamily. Heterotrimer of A, B and C subunits.

The catalysed reaction is L-glutamyl-tRNA(Gln) + L-glutamine + ATP + H2O = L-glutaminyl-tRNA(Gln) + L-glutamate + ADP + phosphate + H(+). The enzyme catalyses L-aspartyl-tRNA(Asn) + L-glutamine + ATP + H2O = L-asparaginyl-tRNA(Asn) + L-glutamate + ADP + phosphate + 2 H(+). Its function is as follows. Allows the formation of correctly charged Asn-tRNA(Asn) or Gln-tRNA(Gln) through the transamidation of misacylated Asp-tRNA(Asn) or Glu-tRNA(Gln) in organisms which lack either or both of asparaginyl-tRNA or glutaminyl-tRNA synthetases. The reaction takes place in the presence of glutamine and ATP through an activated phospho-Asp-tRNA(Asn) or phospho-Glu-tRNA(Gln). The polypeptide is Aspartyl/glutamyl-tRNA(Asn/Gln) amidotransferase subunit B (Streptococcus thermophilus (strain ATCC BAA-250 / LMG 18311)).